A 147-amino-acid chain; its full sequence is Protein archease (147 aa).

Ca(2+) contacts are provided by aspartate 17, aspartate 146, and valine 147.

Belongs to the archease family.

Functionally, activates the tRNA-splicing ligase complex by facilitating the enzymatic turnover of catalytic subunit RtcB. Acts by promoting the guanylylation of RtcB, a key intermediate step in tRNA ligation. Can also alter the NTP specificity of RtcB such that ATP, dGTP or ITP is used efficiently. The protein is Protein archease of Pyrobaculum islandicum (strain DSM 4184 / JCM 9189 / GEO3).